The chain runs to 106 residues: UPF0145 protein PputGB1_2909 (106 aa).

The protein belongs to the UPF0145 family.

The protein is UPF0145 protein PputGB1_2909 of Pseudomonas putida (strain GB-1).